Reading from the N-terminus, the 152-residue chain is Ribosomal RNA large subunit methyltransferase H (152 aa).

S-adenosyl-L-methionine-binding positions include L68, G100, and 119–124 (FGRMTW).

It belongs to the RNA methyltransferase RlmH family. In terms of assembly, homodimer.

The protein localises to the cytoplasm. The enzyme catalyses pseudouridine(1915) in 23S rRNA + S-adenosyl-L-methionine = N(3)-methylpseudouridine(1915) in 23S rRNA + S-adenosyl-L-homocysteine + H(+). In terms of biological role, specifically methylates the pseudouridine at position 1915 (m3Psi1915) in 23S rRNA. This chain is Ribosomal RNA large subunit methyltransferase H, found in Paramagnetospirillum magneticum (strain ATCC 700264 / AMB-1) (Magnetospirillum magneticum).